A 59-amino-acid chain; its full sequence is MAVPKKKSSKSKGRSRAAHHAIKAPNLTSCSNCQEPMMPHRVCPKCGWYDGREVVSMEE.

The tract at residues 1-21 (MAVPKKKSSKSKGRSRAAHHA) is disordered.

It belongs to the bacterial ribosomal protein bL32 family.

The chain is Large ribosomal subunit protein bL32 from Magnetococcus marinus (strain ATCC BAA-1437 / JCM 17883 / MC-1).